Reading from the N-terminus, the 525-residue chain is ESX-1 secretion-associated protein EspE (525 aa).

Disordered regions lie at residues 244–341 (AVAG…PGAA) and 375–494 (ALQA…APVH). Acidic residues predominate over residues 248–258 (DADDTTADDTA). Residues 274 to 286 (ETSKEDGQSRHEN) are compositionally biased toward basic and acidic residues. A compositionally biased stretch (gly residues) spans 292 to 306 (SGGGGGATSGGGGGA). 3 stretches are compositionally biased toward low complexity: residues 307–319 (PSSASSAGPAGTP), 332–341 (TPTDAQPGAA), and 375–397 (ALQAATQAGAQAAQLAGQAAAAP). Positions 411 to 440 (DPDAEGDKDSDKRDGEGKEDGTAPRDREST) are enriched in basic and acidic residues.

The protein localises to the cytoplasm. In Mycolicibacterium smegmatis (strain ATCC 700084 / mc(2)155) (Mycobacterium smegmatis), this protein is ESX-1 secretion-associated protein EspE.